A 164-amino-acid polypeptide reads, in one-letter code: Neurotrophin-3 (164 aa).

The first 3 residues, 1-3, serve as a signal peptide directing secretion; that stretch reads IQS. A propeptide spanning residues 4–120 is cleaved from the precursor; that stretch reads TNMDQQGSLT…ALNRTSRRKR (117 aa). N-linked (GlcNAc...) asparagine glycosylation occurs at Asn113.

It belongs to the NGF-beta family.

It is found in the secreted. Functionally, seems to promote the survival of visceral and proprioceptive sensory neurons. This chain is Neurotrophin-3 (NTF3), found in Sanzinia madagascariensis (Madagascar tree boa).